A 266-amino-acid polypeptide reads, in one-letter code: HLA class II histocompatibility antigen, DR beta 4 chain (266 aa).

Residues 1-29 form the signal peptide; sequence MVCLKLPGGSCMAALTVTLTVLSSPLALA. A beta-1 region spans residues 30–124; it reads GDTQPRFLEQ…VESFTVQRRV (95 aa). Over 30 to 227 the chain is Extracellular; that stretch reads GDTQPRFLEQ…SARSESAQSK (198 aa). Disulfide bonds link C44/C108 and C146/C202. N48 carries N-linked (GlcNAc...) asparagine glycosylation. The segment at 125–227 is beta-2; it reads QPKVTVYPSK…SARSESAQSK (103 aa). One can recognise an Ig-like C1-type domain in the interval 126 to 216; it reads PKVTVYPSKT…PSMMSPLTVQ (91 aa). The helical transmembrane segment at 228–250 threads the bilayer; sequence MLSGVGGFVLGLLFLGTGLFIYF. Residues 251 to 266 are Cytoplasmic-facing; that stretch reads RNQKGHSGLQPTGLLS. K254 participates in a covalent cross-link: Glycyl lysine isopeptide (Lys-Gly) (interchain with G-Cter in ubiquitin).

It belongs to the MHC class II family. In terms of assembly, heterodimer of an alpha and a beta subunit; also referred as MHC class II molecule. In the endoplasmic reticulum (ER) it forms a heterononamer; 3 MHC class II molecules bind to a CD74 homotrimer (also known as invariant chain or HLA class II histocompatibility antigen gamma chain). In the endosomal/lysosomal system; CD74 undergoes sequential degradation by various proteases; leaving a small fragment termed CLIP on each MHC class II molecule. MHC class II molecule interacts with HLA_DM, and HLA_DO in B-cells, in order to release CLIP and facilitate the binding of antigenic peptides. Post-translationally, ubiquitinated by MARCH1 and MARCH8 at Lys-254 leading to sorting into the endosome system and down-regulation of MHC class II. When associated with ubiquitination of the alpha subunit of HLA-DR: HLA-DRA 'Lys-244', the down-regulation of MHC class II may be highly effective.

It is found in the cell membrane. The protein localises to the endoplasmic reticulum membrane. It localises to the golgi apparatus. Its subcellular location is the trans-Golgi network membrane. The protein resides in the endosome membrane. It is found in the lysosome membrane. The protein localises to the late endosome membrane. Its function is as follows. Binds peptides derived from antigens that access the endocytic route of antigen presenting cells (APC) and presents them on the cell surface for recognition by the CD4 T-cells. The peptide binding cleft accommodates peptides of 10-30 residues. The peptides presented by MHC class II molecules are generated mostly by degradation of proteins that access the endocytic route, where they are processed by lysosomal proteases and other hydrolases. Exogenous antigens that have been endocytosed by the APC are thus readily available for presentation via MHC II molecules, and for this reason this antigen presentation pathway is usually referred to as exogenous. As membrane proteins on their way to degradation in lysosomes as part of their normal turn-over are also contained in the endosomal/lysosomal compartments, exogenous antigens must compete with those derived from endogenous components. Autophagy is also a source of endogenous peptides, autophagosomes constitutively fuse with MHC class II loading compartments. In addition to APCs, other cells of the gastrointestinal tract, such as epithelial cells, express MHC class II molecules and CD74 and act as APCs, which is an unusual trait of the GI tract. To produce a MHC class II molecule that presents an antigen, three MHC class II molecules (heterodimers of an alpha and a beta chain) associate with a CD74 trimer in the ER to form a heterononamer. Soon after the entry of this complex into the endosomal/lysosomal system where antigen processing occurs, CD74 undergoes a sequential degradation by various proteases, including CTSS and CTSL, leaving a small fragment termed CLIP (class-II-associated invariant chain peptide). The removal of CLIP is facilitated by HLA-DM via direct binding to the alpha-beta-CLIP complex so that CLIP is released. HLA-DM stabilizes MHC class II molecules until primary high affinity antigenic peptides are bound. The MHC II molecule bound to a peptide is then transported to the cell membrane surface. In B-cells, the interaction between HLA-DM and MHC class II molecules is regulated by HLA-DO. Primary dendritic cells (DCs) also to express HLA-DO. Lysosomal microenvironment has been implicated in the regulation of antigen loading into MHC II molecules, increased acidification produces increased proteolysis and efficient peptide loading. This chain is HLA class II histocompatibility antigen, DR beta 4 chain (HLA-DRB4), found in Homo sapiens (Human).